The primary structure comprises 383 residues: S-adenosylmethionine synthase (383 aa).

Histidine 15 provides a ligand contact to ATP. Aspartate 17 is a binding site for Mg(2+). Residue glutamate 43 participates in K(+) binding. Residues glutamate 56 and glutamine 99 each contribute to the L-methionine site. The segment at 99–109 (QSPDINQGVDR) is flexible loop. ATP is bound by residues 164-166 (DAK), 230-231 (RF), aspartate 239, 245-246 (RK), alanine 262, and lysine 266. Aspartate 239 is an L-methionine binding site. Lysine 270 is an L-methionine binding site.

Belongs to the AdoMet synthase family. Homotetramer; dimer of dimers. Mg(2+) serves as cofactor. It depends on K(+) as a cofactor.

It localises to the cytoplasm. It catalyses the reaction L-methionine + ATP + H2O = S-adenosyl-L-methionine + phosphate + diphosphate. Its pathway is amino-acid biosynthesis; S-adenosyl-L-methionine biosynthesis; S-adenosyl-L-methionine from L-methionine: step 1/1. Catalyzes the formation of S-adenosylmethionine (AdoMet) from methionine and ATP. The overall synthetic reaction is composed of two sequential steps, AdoMet formation and the subsequent tripolyphosphate hydrolysis which occurs prior to release of AdoMet from the enzyme. This chain is S-adenosylmethionine synthase, found in Pectobacterium carotovorum subsp. carotovorum (strain PC1).